The sequence spans 467 residues: Coiled-coil domain-containing protein 174 (467 aa).

Disordered stretches follow at residues 40–77 and 124–162; these read VFGK…EEQK and EMEA…SEEW. Residues 63–99 adopt a coiled-coil conformation; it reads NRAEKDAEQKIEEQKTLDKAREKLEEKAKLYEKMTKG. Basic and acidic residues-rich tracts occupy residues 64–77 and 124–139; these read RAEK…EEQK and EMEA…KAGE. Ser197 carries the phosphoserine modification. The stretch at 267 to 309 forms a coiled coil; that stretch reads LEMLREQTTDQRTKRENIKEKRKAILEARLAKLRQKKMKKSKE. Disordered regions lie at residues 299–363 and 378–453; these read LRQK…HIRE and RQSD…TVTF. Pro residues predominate over residues 324–336; that stretch reads PLPPEPEAVPTPR. Composition is skewed to basic and acidic residues over residues 348-363 and 378-389; these read VQER…HIRE and RQSDLRAERDPE. A compositionally biased stretch (polar residues) spans 425–437; the sequence is PDQSHGPSPEHTS. Over residues 439–448 the composition is skewed to pro residues; it reads TPAPDNPPQA.

In terms of tissue distribution, widely expressed.

The protein localises to the nucleus. In terms of biological role, probably involved in neuronal development. The protein is Coiled-coil domain-containing protein 174 (CCDC174) of Homo sapiens (Human).